Consider the following 427-residue polypeptide: Dihydrofolate synthetase (427 aa).

Position 34 to 37 (34 to 37) interacts with ATP; that stretch reads GKGS. 2 residues coordinate Mg(2+): glutamate 123 and histidine 153. 2 residues coordinate ATP: arginine 275 and aspartate 296.

The protein belongs to the folylpolyglutamate synthase family.

It localises to the cytoplasm. It carries out the reaction 7,8-dihydropteroate + L-glutamate + ATP = 7,8-dihydrofolate + ADP + phosphate + H(+). It functions in the pathway cofactor biosynthesis; tetrahydrofolylpolyglutamate biosynthesis. In terms of biological role, glutamate-adding enzyme which catalyzes the binding of the first glutamyl side chain to dihydropteroate. Leads to the de nove synthesis of tetrahydrofolate. The polypeptide is Dihydrofolate synthetase (FOL3) (Saccharomyces cerevisiae (strain ATCC 204508 / S288c) (Baker's yeast)).